Here is a 225-residue protein sequence, read N- to C-terminus: Cytidylate kinase (225 aa).

Residue 11 to 19 (GPAGAGKST) coordinates ATP.

Belongs to the cytidylate kinase family. Type 1 subfamily.

The protein resides in the cytoplasm. It carries out the reaction CMP + ATP = CDP + ADP. The enzyme catalyses dCMP + ATP = dCDP + ADP. The sequence is that of Cytidylate kinase from Shouchella clausii (strain KSM-K16) (Alkalihalobacillus clausii).